A 419-amino-acid chain; its full sequence is Gamma-glutamyl phosphate reductase (419 aa).

It belongs to the gamma-glutamyl phosphate reductase family.

The protein localises to the cytoplasm. The enzyme catalyses L-glutamate 5-semialdehyde + phosphate + NADP(+) = L-glutamyl 5-phosphate + NADPH + H(+). Its pathway is amino-acid biosynthesis; L-proline biosynthesis; L-glutamate 5-semialdehyde from L-glutamate: step 2/2. Catalyzes the NADPH-dependent reduction of L-glutamate 5-phosphate into L-glutamate 5-semialdehyde and phosphate. The product spontaneously undergoes cyclization to form 1-pyrroline-5-carboxylate. The protein is Gamma-glutamyl phosphate reductase of Caulobacter sp. (strain K31).